We begin with the raw amino-acid sequence, 297 residues long: Nucleotide-binding protein Bxeno_A0336 (297 aa).

8–15 serves as a coordination point for ATP; sequence GISGSGKS. Position 57-60 (57-60) interacts with GTP; sequence DARS.

This sequence belongs to the RapZ-like family.

Functionally, displays ATPase and GTPase activities. The polypeptide is Nucleotide-binding protein Bxeno_A0336 (Paraburkholderia xenovorans (strain LB400)).